The sequence spans 380 residues: ATP phosphoribosyltransferase regulatory subunit (380 aa).

It belongs to the class-II aminoacyl-tRNA synthetase family. HisZ subfamily. As to quaternary structure, heteromultimer composed of HisG and HisZ subunits.

The protein localises to the cytoplasm. The protein operates within amino-acid biosynthesis; L-histidine biosynthesis; L-histidine from 5-phospho-alpha-D-ribose 1-diphosphate: step 1/9. Required for the first step of histidine biosynthesis. May allow the feedback regulation of ATP phosphoribosyltransferase activity by histidine. This is ATP phosphoribosyltransferase regulatory subunit from Thermoanaerobacter pseudethanolicus (strain ATCC 33223 / 39E) (Clostridium thermohydrosulfuricum).